A 132-amino-acid polypeptide reads, in one-letter code: Ribosome-binding factor A (132 aa).

The protein belongs to the RbfA family. In terms of assembly, monomer. Binds 30S ribosomal subunits, but not 50S ribosomal subunits or 70S ribosomes.

The protein resides in the cytoplasm. In terms of biological role, one of several proteins that assist in the late maturation steps of the functional core of the 30S ribosomal subunit. Associates with free 30S ribosomal subunits (but not with 30S subunits that are part of 70S ribosomes or polysomes). Required for efficient processing of 16S rRNA. May interact with the 5'-terminal helix region of 16S rRNA. The polypeptide is Ribosome-binding factor A (Pseudomonas putida (strain W619)).